A 984-amino-acid polypeptide reads, in one-letter code: Vacuolar sorting protein 3 (984 aa).

Residues 21–339 form the CNH domain; the sequence is KIRALSLSPI…GCGPSLLAAD (319 aa). The CHCR repeat unit spans residues 663-844; the sequence is VLTSDKRTEE…YLDPQNGKEP (182 aa).

The protein belongs to the TRAP1 family. In terms of assembly, component of the class C core vacuole/endosome tethering (CORVET) complex. Their common core is composed of the class C Vps core proteins VPS11, VCL1, VPS18 and VPS33, which in CORVET further associates with VPS3. Interacts directly with VPS11. Binds to RABF2A and RABF2B.

It localises to the endosome membrane. Its subcellular location is the cytoplasm. Functionally, essential protein required during embryogenesis. Believed to act as a component of the putative class C core vacuole/endosome tethering (CORVET) endosomal tethering complexes. CORVET is required for vacuolar transport of SYP22. Involved in root development. Plays a role in vesicle-mediated protein trafficking of the endocytic membrane transport pathway. This Arabidopsis thaliana (Mouse-ear cress) protein is Vacuolar sorting protein 3.